Consider the following 177-residue polypeptide: O-acetyl-ADP-ribose deacetylase (177 aa).

The Macro domain maps to 1 to 175 (MKSRIHVQHG…LYERLLTQQG (175 aa)). Residues 11–12 (DI), N25, 33–35 (GVD), and 122–126 (STGAY) contribute to the substrate site. The active-site Proton acceptor is the D35.

This sequence belongs to the MacroD-type family. YmdB subfamily. Homodimer. Interacts with RNase III.

The catalysed reaction is 3''-O-acetyl-ADP-D-ribose + H2O = ADP-D-ribose + acetate + H(+). The enzyme catalyses 2''-O-acetyl-ADP-D-ribose + H2O = ADP-D-ribose + acetate + H(+). Its function is as follows. Deacetylates O-acetyl-ADP ribose to yield ADP-ribose and free acetate. Down-regulates ribonuclease 3 (RNase III) activity. Acts by interacting directly with the region of the ribonuclease that is required for dimerization/activation. The sequence is that of O-acetyl-ADP-ribose deacetylase from Citrobacter koseri (strain ATCC BAA-895 / CDC 4225-83 / SGSC4696).